Reading from the N-terminus, the 943-residue chain is Protein translocase subunit SecA (943 aa).

Residues Gln-77, 95-99 (GEGKT), and Asp-484 each bind ATP.

The protein belongs to the SecA family. As to quaternary structure, monomer and homodimer. Part of the essential Sec protein translocation apparatus which comprises SecA, SecYEG and auxiliary proteins SecDF. Other proteins may also be involved.

The protein localises to the cell membrane. The protein resides in the cytoplasm. It catalyses the reaction ATP + H2O + cellular proteinSide 1 = ADP + phosphate + cellular proteinSide 2.. In terms of biological role, part of the Sec protein translocase complex. Interacts with the SecYEG preprotein conducting channel. Has a central role in coupling the hydrolysis of ATP to the transfer of proteins into and across the cell membrane, serving as an ATP-driven molecular motor driving the stepwise translocation of polypeptide chains across the membrane. This Mesoplasma florum (strain ATCC 33453 / NBRC 100688 / NCTC 11704 / L1) (Acholeplasma florum) protein is Protein translocase subunit SecA.